Here is a 43-residue protein sequence, read N- to C-terminus: Omega-agatoxin-Aa3c (43 aa).

Intrachain disulfides connect C2-C19, C9-C25, and C27-C38.

This sequence belongs to the neurotoxin 04 (omega-agtx) family. 03 (type II/III omega-agtx) subfamily. As to expression, expressed by the venom gland.

Its subcellular location is the secreted. Omega-agatoxins are antagonists of voltage-gated calcium channels (Cav). The polypeptide is Omega-agatoxin-Aa3c (Agelenopsis aperta (North American funnel-web spider)).